The following is a 235-amino-acid chain: UPF0173 metal-dependent hydrolase Oant_3663 (235 aa).

This sequence belongs to the UPF0173 family.

The protein is UPF0173 metal-dependent hydrolase Oant_3663 of Brucella anthropi (strain ATCC 49188 / DSM 6882 / CCUG 24695 / JCM 21032 / LMG 3331 / NBRC 15819 / NCTC 12168 / Alc 37) (Ochrobactrum anthropi).